The sequence spans 735 residues: MELRFPRFSQGLAQDPTTRRIWFGIATAHDFESHDDITEERLYQNIFASHFGQLAIIFLWTSGNLFHVAWQGNFESWIQDPLHVRPIAHAIWDPHFGQPAVEAFTRGGAAGPVNIAYSGVYQWWYTIGLRTNEDLYTGALFLLFLSTLSLIGGWLHLQPKWKPSLSWFKNAESRLNHHLSGLFGVSSLAWTGHLVHVAIPGSSRGEYVRWNNFLDVLPYPQGLGPLLTGQWNLYAQNPDSSNHLFGTTQGAGTAILTLLGGFHPQTQSLWLTDIAHHHLAIAFIFLIAGHMYRTNFGIGHSIKDLLEAHTPPGGRLGRGHKGLYDTINNSIHFQLGLALASLGVITSLVAQHMYSLPAYAFIAQDFTTQAALYTHHQYIAGFIMTGAFAHGAIFFIRDYNPEQNEDNVLARMLDHKEAIISHLSWASLFLGFHTLGPYVHNDVMLAFGTPEKQILIEPIFAQWIQSAHGKTTYGFDILLSSTNGPTFNAGRNIWLPGWLNAVNENSNSLFLTIGPGDFLVHHAIALGLHTTTLILVKGALDARGSKLMPDKKDFGYSFPCDGPGRGGTCDISAWDAFYLAVFWMLNTIGWVTFYWHWKHITLWQGNVSQFNESSTYLMGWLRDYLWLNSSQLINGYNPFGMNSLSVWAWMFLFGHLVWATGFMFLISWRGYWQELIETLAWAHERTPLANLIRWRDKPVALSVVQARLVGLAHFSVGYIFTYAAFLIASTSGKFG.

Helical transmembrane passes span 46-69, 135-158, 175-199, 274-292, 331-354, 370-396, 418-440, and 518-536; these read IFASHFGQLAIIFLWTSGNLFHVA, LYTGALFLLFLSTLSLIGGWLHLQ, LNHHLSGLFGVSSLAWTGHLVHVAI, IAHHHLAIAFIFLIAGHMY, IHFQLGLALASLGVITSLVAQHMY, AALYTHHQYIAGFIMTGAFAHGAIFFI, AIISHLSWASLFLGFHTLGPYVH, and FLVHHAIALGLHTTTLILV. Residues Cys-560 and Cys-569 each coordinate [4Fe-4S] cluster. 2 helical membrane-spanning segments follow: residues 576–597 and 644–666; these read AFYLAVFWMLNTIGWVTFYWHW and LSVWAWMFLFGHLVWATGFMFLI. Residues His-655, Met-663, and Tyr-671 each coordinate chlorophyll a. Trp-672 serves as a coordination point for phylloquinone. The helical transmembrane segment at 708–728 threads the bilayer; sequence LVGLAHFSVGYIFTYAAFLIA.

Belongs to the PsaA/PsaB family. In terms of assembly, the PsaA/B heterodimer binds the P700 chlorophyll special pair and subsequent electron acceptors. PSI consists of a core antenna complex that captures photons, and an electron transfer chain that converts photonic excitation into a charge separation. The eukaryotic PSI reaction center is composed of at least 11 subunits. The cofactor is P700 is a chlorophyll a/chlorophyll a' dimer, A0 is one or more chlorophyll a, A1 is one or both phylloquinones and FX is a shared 4Fe-4S iron-sulfur center..

The protein resides in the plastid. It is found in the chloroplast thylakoid membrane. The enzyme catalyses reduced [plastocyanin] + hnu + oxidized [2Fe-2S]-[ferredoxin] = oxidized [plastocyanin] + reduced [2Fe-2S]-[ferredoxin]. Functionally, psaA and PsaB bind P700, the primary electron donor of photosystem I (PSI), as well as the electron acceptors A0, A1 and FX. PSI is a plastocyanin-ferredoxin oxidoreductase, converting photonic excitation into a charge separation, which transfers an electron from the donor P700 chlorophyll pair to the spectroscopically characterized acceptors A0, A1, FX, FA and FB in turn. Oxidized P700 is reduced on the lumenal side of the thylakoid membrane by plastocyanin. The protein is Photosystem I P700 chlorophyll a apoprotein A2 of Zea mays (Maize).